Consider the following 206-residue polypeptide: Thymidylate kinase (206 aa).

10 to 17 (GIDGAGKS) contributes to the ATP binding site.

It belongs to the thymidylate kinase family.

The catalysed reaction is dTMP + ATP = dTDP + ADP. Its function is as follows. Phosphorylation of dTMP to form dTDP in both de novo and salvage pathways of dTTP synthesis. In Neisseria meningitidis serogroup B (strain ATCC BAA-335 / MC58), this protein is Thymidylate kinase (tmk).